The sequence spans 423 residues: 3-phosphoshikimate 1-carboxyvinyltransferase (423 aa).

Positions 28, 29, and 33 each coordinate 3-phosphoshikimate. Lysine 28 provides a ligand contact to phosphoenolpyruvate. Residues glycine 96 and arginine 124 each coordinate phosphoenolpyruvate. 6 residues coordinate 3-phosphoshikimate: serine 169, serine 170, glutamine 171, serine 198, glutamate 312, and histidine 339. Glutamine 171 contributes to the phosphoenolpyruvate binding site. Glutamate 312 acts as the Proton acceptor in catalysis. Arginine 343, arginine 384, and lysine 409 together coordinate phosphoenolpyruvate.

The protein belongs to the EPSP synthase family. As to quaternary structure, monomer.

The protein resides in the cytoplasm. The catalysed reaction is 3-phosphoshikimate + phosphoenolpyruvate = 5-O-(1-carboxyvinyl)-3-phosphoshikimate + phosphate. Its pathway is metabolic intermediate biosynthesis; chorismate biosynthesis; chorismate from D-erythrose 4-phosphate and phosphoenolpyruvate: step 6/7. Functionally, catalyzes the transfer of the enolpyruvyl moiety of phosphoenolpyruvate (PEP) to the 5-hydroxyl of shikimate-3-phosphate (S3P) to produce enolpyruvyl shikimate-3-phosphate and inorganic phosphate. The polypeptide is 3-phosphoshikimate 1-carboxyvinyltransferase (Acidothermus cellulolyticus (strain ATCC 43068 / DSM 8971 / 11B)).